We begin with the raw amino-acid sequence, 192 residues long: Ribonuclease HII (192 aa).

In terms of domain architecture, RNase H type-2 spans K2–V187. A divalent metal cation is bound by residues D8, E9, and D97.

It belongs to the RNase HII family. Mn(2+) is required as a cofactor. The cofactor is Mg(2+).

The protein localises to the cytoplasm. It catalyses the reaction Endonucleolytic cleavage to 5'-phosphomonoester.. Its function is as follows. Endonuclease that specifically degrades the RNA of RNA-DNA hybrids. This is Ribonuclease HII from Aliarcobacter butzleri (strain RM4018) (Arcobacter butzleri).